Reading from the N-terminus, the 640-residue chain is Sodium-dependent nutrient amino acid transporter 1 (640 aa).

Residues 1–13 (MELKPNGNHNNNN) show a composition bias toward low complexity. Residues 1-25 (MELKPNGNHNNNNAAEKSEDTEKAK) are disordered. At 1-30 (MELKPNGNHNNNNAAEKSEDTEKAKAERTN) the chain is on the cytoplasmic side. Residues 16-25 (EKSEDTEKAK) are compositionally biased toward basic and acidic residues. 3 helical membrane-spanning segments follow: residues 31-51 (WGNG…LGNV), 64-84 (GAFL…MYYL), and 117-137 (TICI…YLFV). Asn174, Asn181, and Asn197 each carry an N-linked (GlcNAc...) asparagine glycan. The next 9 helical transmembrane spans lie at 228 to 248 (PDWK…LVIM), 257 to 277 (AAYF…IRAV), 306 to 326 (AVVQ…MFAS), 340 to 360 (IVTT…FAIL), 400 to 420 (LFSV…IVAL), 447 to 467 (CGFL…LTLV), 473 to 493 (TYVV…IYGL), 515 to 535 (CWSF…MVTI), and 551 to 571 (VAGW…GLWY).

The protein belongs to the sodium:neurotransmitter symporter (SNF) (TC 2.A.22) family.

It is found in the membrane. Functionally, unusual broad substrate spectrum amino acid:sodium cotransporter that promotes absorption of the D isomers of essential amino acids. Neutral amino acids are the preferred substrates, especially methionine and phenylalanine. This Drosophila ananassae (Fruit fly) protein is Sodium-dependent nutrient amino acid transporter 1.